The primary structure comprises 593 residues: MERSKSALAHSSSYGQACTQCYKAKCRCVRTPSGDTCERCIRLKKRCEPSESVRRRNAQSTQTAKVSDRRIARLEDKMESLLSAMQSFIGTTASSASSANVIQPQQLNCDGLPSSTSYSNSSLVTPASSTLGFNEGQTFAPDSLTTVSPNSNQNAIFLSQPYVPSTPAPSPNHADERLHFFRTRMLPSFPFLDLTPDMTSWYLRQNRPFLFQAIHTVTTFSTQERLTQVEELKRLIFTSALLKVQSNIDLLLGLLTYLAWSTDPFLGRADLVSRLMMLAISLVISSHLGRQDALRWTPQMEEALRVLTISEACPSDRLFVAQVRLQLLKQRSDEARQQDEARTGTAPTAASAPRLLYLKTLRRELQELRASFPPDLHQIDVLNTHAQYVELYINQLAYSISQDSLPLDLAGRMGTGSQLGFQRLECLWQSVENIKSWLDNFYKIPCSKLVGQPFHFWSQMILTITLLKYLTTLKDPDWDCQAVRNTVHLISTMDCMLQKLDLSSKEPELQCNDHLLKFLSKLLSRCRVWAEARWNIASQMQDGDTRQCRSANPDTNSHNYYIPDLDQMVFMQSMDLGDDQWFENVLGMPTMFY.

The zn(2)-C6 fungal-type DNA-binding region spans cysteine 18 to cysteine 47.

It is found in the nucleus. Transcriptional regulator that regulates both the azasperpyranone A biosynthesis clusters A and B. Specifically up-regulates the expression of the cluster A and B specific transcription factors ATEG_03638 and ATEG_07666, which in turn activate the expression of their respective clusters. In Aspergillus terreus (strain NIH 2624 / FGSC A1156), this protein is Transcription factor ATEG_07667.